Consider the following 583-residue polypeptide: 2-succinyl-5-enolpyruvyl-6-hydroxy-3-cyclohexene-1-carboxylate synthase (583 aa).

The protein belongs to the TPP enzyme family. MenD subfamily. In terms of assembly, homodimer. Requires Mg(2+) as cofactor. Mn(2+) serves as cofactor. Thiamine diphosphate is required as a cofactor.

It catalyses the reaction isochorismate + 2-oxoglutarate + H(+) = 5-enolpyruvoyl-6-hydroxy-2-succinyl-cyclohex-3-ene-1-carboxylate + CO2. It participates in quinol/quinone metabolism; 1,4-dihydroxy-2-naphthoate biosynthesis; 1,4-dihydroxy-2-naphthoate from chorismate: step 2/7. It functions in the pathway quinol/quinone metabolism; menaquinone biosynthesis. Functionally, catalyzes the thiamine diphosphate-dependent decarboxylation of 2-oxoglutarate and the subsequent addition of the resulting succinic semialdehyde-thiamine pyrophosphate anion to isochorismate to yield 2-succinyl-5-enolpyruvyl-6-hydroxy-3-cyclohexene-1-carboxylate (SEPHCHC). This is 2-succinyl-5-enolpyruvyl-6-hydroxy-3-cyclohexene-1-carboxylate synthase from Chlorobium phaeovibrioides (strain DSM 265 / 1930) (Prosthecochloris vibrioformis (strain DSM 265)).